Consider the following 217-residue polypeptide: Casparian strip membrane protein 6 (217 aa).

Residues 1–57 are Cytoplasmic-facing; that stretch reads MEEAKHIEAVEAKQIEAEEAQRIKAGEAKQIEAGETSRSSRKVITFEPKLVINKGIS. The chain crosses the membrane as a helical span at residues 58–78; that stretch reads VLGFVLRLFAVFGTIGSALAM. Topologically, residues 79–103 are extracellular; it reads GTTHESVVSLSQLVLLKVKYSDLPT. A helical transmembrane segment spans residues 104–124; it reads LMFFVVANAIAGGYLVLSLPV. The Cytoplasmic portion of the chain corresponds to 125-138; it reads SIFHIFSTKAKTSR. A helical membrane pass occupies residues 139 to 159; that stretch reads IILLVIDTVMLALVSSGASAA. Over 160–191 the chain is Extracellular; sequence TATVYLAHEGNTTANWPPICQQFDGFCERISG. N-linked (GlcNAc...) asparagine glycosylation occurs at asparagine 170. A helical membrane pass occupies residues 192 to 212; that stretch reads SLIGSFCAVILLMLIVINSAI. Residues 213-217 lie on the Cytoplasmic side of the membrane; sequence SLSRH.

It belongs to the Casparian strip membrane proteins (CASP) family. Homodimer and heterodimers.

The protein localises to the cell membrane. In terms of biological role, regulates membrane-cell wall junctions and localized cell wall deposition. Required for establishment of the Casparian strip membrane domain (CSD) and the subsequent formation of Casparian strips, a cell wall modification of the root endodermis that determines an apoplastic barrier between the intraorganismal apoplasm and the extraorganismal apoplasm and prevents lateral diffusion. This Arabidopsis lyrata subsp. lyrata (Lyre-leaved rock-cress) protein is Casparian strip membrane protein 6.